Consider the following 285-residue polypeptide: 4-diphosphocytidyl-2-C-methyl-D-erythritol kinase (285 aa).

Lysine 12 is an active-site residue. 95–105 (PVGAGLAGGST) contributes to the ATP binding site. Aspartate 137 is a catalytic residue.

This sequence belongs to the GHMP kinase family. IspE subfamily.

It carries out the reaction 4-CDP-2-C-methyl-D-erythritol + ATP = 4-CDP-2-C-methyl-D-erythritol 2-phosphate + ADP + H(+). It functions in the pathway isoprenoid biosynthesis; isopentenyl diphosphate biosynthesis via DXP pathway; isopentenyl diphosphate from 1-deoxy-D-xylulose 5-phosphate: step 3/6. Its function is as follows. Catalyzes the phosphorylation of the position 2 hydroxy group of 4-diphosphocytidyl-2C-methyl-D-erythritol. This is 4-diphosphocytidyl-2-C-methyl-D-erythritol kinase from Syntrophomonas wolfei subsp. wolfei (strain DSM 2245B / Goettingen).